The primary structure comprises 161 residues: GTP-dependent dephospho-CoA kinase (161 aa).

GTP is bound by residues Asp-40, Val-41, Val-42, Asp-59, and Glu-112.

Belongs to the GTP-dependent DPCK family.

The catalysed reaction is 3'-dephospho-CoA + GTP = GDP + CoA + H(+). It functions in the pathway cofactor biosynthesis; coenzyme A biosynthesis. In terms of biological role, catalyzes the GTP-dependent phosphorylation of the 3'-hydroxyl group of dephosphocoenzyme A to form coenzyme A (CoA). The polypeptide is GTP-dependent dephospho-CoA kinase (Methanoculleus marisnigri (strain ATCC 35101 / DSM 1498 / JR1)).